Consider the following 185-residue polypeptide: Elongation factor P (185 aa).

It belongs to the elongation factor P family.

The protein resides in the cytoplasm. The protein operates within protein biosynthesis; polypeptide chain elongation. Its function is as follows. Involved in peptide bond synthesis. Stimulates efficient translation and peptide-bond synthesis on native or reconstituted 70S ribosomes in vitro. Probably functions indirectly by altering the affinity of the ribosome for aminoacyl-tRNA, thus increasing their reactivity as acceptors for peptidyl transferase. The chain is Elongation factor P from Caldicellulosiruptor bescii (strain ATCC BAA-1888 / DSM 6725 / KCTC 15123 / Z-1320) (Anaerocellum thermophilum).